The sequence spans 151 residues: Ribosome maturation factor RimP (151 aa).

The protein belongs to the RimP family.

The protein localises to the cytoplasm. In terms of biological role, required for maturation of 30S ribosomal subunits. This is Ribosome maturation factor RimP from Nitrosococcus oceani (strain ATCC 19707 / BCRC 17464 / JCM 30415 / NCIMB 11848 / C-107).